Here is a 351-residue protein sequence, read N- to C-terminus: uncharacterized protein (351 aa).

Aspartate 215, aspartate 226, histidine 290, glutamate 319, and glutamate 333 together coordinate Mn(2+).

The protein belongs to the peptidase M24B family. Requires Mn(2+) as cofactor.

This is an uncharacterized protein from Staphylococcus aureus (strain MW2).